The chain runs to 416 residues: MSLVAIGINHKTATVDLREKVAFSPDKIHDAMRSLACTTSSNEAVIVSTCNRTELYCNNARAEEVIHWLESYHNLSHDELMPCVYHHEGQEAVRHLMRVASGLDSLVLGEPQILGQVKQSFAKAKEAGTVAVTLDRLFQSTFSVAKKVRTETEIGTAAVSVAFAAVSMAKHIFSSLASTKVLLIGAGETIELVARHLKENGVSSMVVANRTVERAQAMCEEFGATAITLSQIPDFLPKADIVISSTASPLPILGKGMVEKALKQRRHQPMLLVDIAVPRDIEAEVGELDDAFLYTVDDLQSIIEQNMASRKEAAEQAEVIAQEQSFLFMDWIRSLESVDSIREYRTASMAIKDELVERALNKLAQGADGEQVILELANKLTNRLIHAPTQALTTASRQGDLNTLGQLRTALGLDKH.

Substrate contacts are provided by residues 49–52 (TCNR), Ser105, 110–112 (EPQ), and Gln116. The active-site Nucleophile is Cys50. 185 to 190 (GAGETI) contributes to the NADP(+) binding site.

It belongs to the glutamyl-tRNA reductase family. Homodimer.

The enzyme catalyses (S)-4-amino-5-oxopentanoate + tRNA(Glu) + NADP(+) = L-glutamyl-tRNA(Glu) + NADPH + H(+). Its pathway is porphyrin-containing compound metabolism; protoporphyrin-IX biosynthesis; 5-aminolevulinate from L-glutamyl-tRNA(Glu): step 1/2. Catalyzes the NADPH-dependent reduction of glutamyl-tRNA(Glu) to glutamate 1-semialdehyde (GSA). The sequence is that of Glutamyl-tRNA reductase from Shewanella amazonensis (strain ATCC BAA-1098 / SB2B).